The primary structure comprises 100 residues: UPF0213 protein YhbQ (100 aa).

The region spanning 2–77 is the GIY-YIG domain; that stretch reads TPWFLYLIRT…KQLTKRQKER (76 aa).

It belongs to the UPF0213 family.

This chain is UPF0213 protein YhbQ, found in Escherichia coli O139:H28 (strain E24377A / ETEC).